The sequence spans 98 residues: Small ribosomal subunit protein uS17 (98 aa).

Belongs to the universal ribosomal protein uS17 family. In terms of assembly, part of the 30S ribosomal subunit.

Functionally, one of the primary rRNA binding proteins, it binds specifically to the 5'-end of 16S ribosomal RNA. This Synechococcus sp. (strain CC9605) protein is Small ribosomal subunit protein uS17.